We begin with the raw amino-acid sequence, 328 residues long: L-lactate dehydrogenase (328 aa).

NAD(+) is bound by residues Val-18, Glu-39, Lys-46, Tyr-71, and 85-86 (GA). Positions 88 and 94 each coordinate substrate. NAD(+) is bound by residues Ser-107, 124–126 (AAN), and Ser-149. 126–129 (NPVD) contributes to the substrate binding site. Substrate is bound at residue 154–157 (DTAR). Beta-D-fructose 1,6-bisphosphate-binding residues include Arg-159 and His-174. The active-site Proton acceptor is His-181. Tyr-226 carries the phosphotyrosine modification. Thr-235 contributes to the substrate binding site.

It belongs to the LDH/MDH superfamily. LDH family. As to quaternary structure, homotetramer.

Its subcellular location is the cytoplasm. The catalysed reaction is (S)-lactate + NAD(+) = pyruvate + NADH + H(+). Its pathway is fermentation; pyruvate fermentation to lactate; (S)-lactate from pyruvate: step 1/1. With respect to regulation, allosterically activated by fructose 1,6-bisphosphate (FBP). In terms of biological role, catalyzes the conversion of lactate to pyruvate. The chain is L-lactate dehydrogenase from Streptococcus mutans serotype c (strain ATCC 700610 / UA159).